We begin with the raw amino-acid sequence, 508 residues long: Photosystem II CP47 reaction center protein (508 aa).

6 helical membrane-spanning segments follow: residues 21–36 (AVHL…WAGS), 101–115 (IVLS…IWHW), 140–156 (GIHL…FGAF), 203–218 (IAAG…FHLS), 237–252 (VLSS…AFVV), and 457–472 (TFAL…HGAR).

This sequence belongs to the PsbB/PsbC family. PsbB subfamily. In terms of assembly, PSII is composed of 1 copy each of membrane proteins PsbA, PsbB, PsbC, PsbD, PsbE, PsbF, PsbH, PsbI, PsbJ, PsbK, PsbL, PsbM, PsbT, PsbX, PsbY, PsbZ, Psb30/Ycf12, at least 3 peripheral proteins of the oxygen-evolving complex and a large number of cofactors. It forms dimeric complexes. Binds multiple chlorophylls. PSII binds additional chlorophylls, carotenoids and specific lipids. serves as cofactor.

The protein localises to the plastid. It localises to the chloroplast thylakoid membrane. One of the components of the core complex of photosystem II (PSII). It binds chlorophyll and helps catalyze the primary light-induced photochemical processes of PSII. PSII is a light-driven water:plastoquinone oxidoreductase, using light energy to abstract electrons from H(2)O, generating O(2) and a proton gradient subsequently used for ATP formation. This is Photosystem II CP47 reaction center protein from Anthoceros angustus (Hornwort).